The primary structure comprises 321 residues: Ribosomal RNA small subunit methyltransferase H (321 aa).

Residues 44–46 (GGH), D64, F88, D109, and Q116 each bind S-adenosyl-L-methionine.

Belongs to the methyltransferase superfamily. RsmH family.

It is found in the cytoplasm. It carries out the reaction cytidine(1402) in 16S rRNA + S-adenosyl-L-methionine = N(4)-methylcytidine(1402) in 16S rRNA + S-adenosyl-L-homocysteine + H(+). In terms of biological role, specifically methylates the N4 position of cytidine in position 1402 (C1402) of 16S rRNA. In Methylobacillus flagellatus (strain ATCC 51484 / DSM 6875 / VKM B-1610 / KT), this protein is Ribosomal RNA small subunit methyltransferase H.